Here is a 281-residue protein sequence, read N- to C-terminus: Digeranylgeranylglyceryl phosphate synthase (281 aa).

A run of 7 helical transmembrane segments spans residues 14–34 (AMAAFAGLIGVLIAYNILSSA), 38–58 (VSLSLFDTSLIFAIVFLVTGA), 95–115 (LFLFITGITLAFLVNPLCGII), 149–169 (FLFGGAVFGMAGLQALVVLFL), 207–227 (ASYIAAAFGFTAMLASPVPYL), 235–255 (YLFVVAIADIFFLIAVYQILG), and 259–279 (AARSSKLFKFAMLFALISFIV).

It belongs to the UbiA prenyltransferase family. DGGGP synthase subfamily. It depends on Mg(2+) as a cofactor.

It is found in the cell membrane. The catalysed reaction is sn-3-O-(geranylgeranyl)glycerol 1-phosphate + (2E,6E,10E)-geranylgeranyl diphosphate = 2,3-bis-O-(geranylgeranyl)-sn-glycerol 1-phosphate + diphosphate. Its pathway is membrane lipid metabolism; glycerophospholipid metabolism. Its function is as follows. Prenyltransferase that catalyzes the transfer of the geranylgeranyl moiety of geranylgeranyl diphosphate (GGPP) to the C2 hydroxyl of (S)-3-O-geranylgeranylglyceryl phosphate (GGGP). This reaction is the second ether-bond-formation step in the biosynthesis of archaeal membrane lipids. In Methanococcoides burtonii (strain DSM 6242 / NBRC 107633 / OCM 468 / ACE-M), this protein is Digeranylgeranylglyceryl phosphate synthase.